The following is a 116-amino-acid chain: Small ribosomal subunit protein uS10m (116 aa).

Belongs to the universal ribosomal protein uS10 family.

The protein resides in the mitochondrion. The sequence is that of Small ribosomal subunit protein uS10m (RPS10) from Reclinomonas americana.